The sequence spans 362 residues: MGSSFGHLFRISTFGESHGGGVGVVIDGCPPRLEISEAEIQFELDRRRPGQSKITTPRKEADQCEILSGVVDGKTLGTPIAIVVRNKDQRSQDYSEMQVAYRPSHADATYDAKYGIRAVAGGGRSSARETIGRVAAGAIAKKLLREIAGVEIVGYVKRIKDLEGQIDPETVTLEQVESTIVRCPDEAIAPQMIDLIEAIGREGDSLGGVVECVARRVPRGLGEPVFDKLEADLAKACMSLPATKGFEIGSGFAGTEMTGSEHNDAFYTDEQGQIRTRTNRSGGTQGGISNGENIVIRVAFKPTATIRKEQETVTNSGEATTLAARGRHDPCVLPRAVPMVEAMVALVLCDHLLRQQAQCSWW.

Arg-47 contacts NADP(+). FMN contacts are provided by residues 124–126 (RSS), Gly-286, 301–305 (KPTAT), and Arg-327.

The protein belongs to the chorismate synthase family. In terms of assembly, homotetramer. FMNH2 is required as a cofactor.

The catalysed reaction is 5-O-(1-carboxyvinyl)-3-phosphoshikimate = chorismate + phosphate. It functions in the pathway metabolic intermediate biosynthesis; chorismate biosynthesis; chorismate from D-erythrose 4-phosphate and phosphoenolpyruvate: step 7/7. Its function is as follows. Catalyzes the anti-1,4-elimination of the C-3 phosphate and the C-6 proR hydrogen from 5-enolpyruvylshikimate-3-phosphate (EPSP) to yield chorismate, which is the branch point compound that serves as the starting substrate for the three terminal pathways of aromatic amino acid biosynthesis. This reaction introduces a second double bond into the aromatic ring system. The protein is Chorismate synthase of Synechococcus elongatus (strain ATCC 33912 / PCC 7942 / FACHB-805) (Anacystis nidulans R2).